A 258-amino-acid chain; its full sequence is Aspartate/glutamate leucyltransferase (258 aa).

Belongs to the R-transferase family. Bpt subfamily.

Its subcellular location is the cytoplasm. The enzyme catalyses N-terminal L-glutamyl-[protein] + L-leucyl-tRNA(Leu) = N-terminal L-leucyl-L-glutamyl-[protein] + tRNA(Leu) + H(+). It catalyses the reaction N-terminal L-aspartyl-[protein] + L-leucyl-tRNA(Leu) = N-terminal L-leucyl-L-aspartyl-[protein] + tRNA(Leu) + H(+). Its function is as follows. Functions in the N-end rule pathway of protein degradation where it conjugates Leu from its aminoacyl-tRNA to the N-termini of proteins containing an N-terminal aspartate or glutamate. This Rhodopseudomonas palustris (strain BisB18) protein is Aspartate/glutamate leucyltransferase.